The sequence spans 460 residues: MARTVVVGLGRSGIGAARLLQAEGHQVTVLERSIEPHLQSLAADLRLQGIAVELGKPLELNSFIPLLDQLDAVVISPGIAWDHPTLTALRQRGIDIDGEMAVAWRSLSHLPWIAITGTNGKTTVTHLLNHVLESNGLRAPMGGNVGHAAAEVALKWRQPNAQRPDWLVMELSSYQIEAAPEIAPRMGIWTNLTPDHLERHGTLDAYRTIKRGLLERSEIRIFNGDDPDLRSQRSSWDKGLWVSSEGPGTANHRADFWIDAEGLVREPQGALFAASALAMPGQHNLQNLLLVTAAARQTGLPAKAIEASLRSFPGVPHRLEQLGHIQQMSVYNDSKATNYDAACVGLKAVPPPAVVLAGGQTKQGDASGWLKQLDQNACAVILFGAGASELQELIKTSGFSGELHCCSNLNAAVTLAIPLGVERQAACLLLSPACASFDQYQDFEARGEHFRSLISSHLTA.

117-123 (GTNGKTT) lines the ATP pocket.

Belongs to the MurCDEF family.

It is found in the cytoplasm. The enzyme catalyses UDP-N-acetyl-alpha-D-muramoyl-L-alanine + D-glutamate + ATP = UDP-N-acetyl-alpha-D-muramoyl-L-alanyl-D-glutamate + ADP + phosphate + H(+). It participates in cell wall biogenesis; peptidoglycan biosynthesis. Its function is as follows. Cell wall formation. Catalyzes the addition of glutamate to the nucleotide precursor UDP-N-acetylmuramoyl-L-alanine (UMA). In Prochlorococcus marinus (strain MIT 9313), this protein is UDP-N-acetylmuramoylalanine--D-glutamate ligase.